An 836-amino-acid polypeptide reads, in one-letter code: Sucrose synthase 5 (836 aa).

Residues 270–748 (RIFNVVIFSV…GLQRINECYT (479 aa)) are GT-B glycosyltransferase. The disordered stretch occupies residues 805 to 836 (PPPLPPKPLVKPSASKGSKRTQPRLSFRLFGA).

It belongs to the glycosyltransferase 1 family. Plant sucrose synthase subfamily. As to expression, detected in the whole plant but more precisely confined to the vasculature in cotyledons, leaves, petals, anthers and roots. Also detected in developing siliques, young immature rosette and cauline leaves.

The protein resides in the secreted. It localises to the cell wall. It catalyses the reaction an NDP-alpha-D-glucose + D-fructose = a ribonucleoside 5'-diphosphate + sucrose + H(+). Its function is as follows. Sucrose-cleaving enzyme that provides UDP-glucose and fructose for various metabolic pathways. Functions in callose synthesis at the site of phloem sieve elements. The protein is Sucrose synthase 5 (SUS5) of Arabidopsis thaliana (Mouse-ear cress).